We begin with the raw amino-acid sequence, 56 residues long: MAVQQNKSTRSKRGMRRSHNALPITQISVDKVSKEIHRRHYITMNGFYRGVKMIEK.

Residues 1-23 (MAVQQNKSTRSKRGMRRSHNALP) form a disordered region. Positions 9 to 19 (TRSKRGMRRSH) are enriched in basic residues.

Belongs to the bacterial ribosomal protein bL32 family.

This chain is Large ribosomal subunit protein bL32, found in Blochmanniella floridana.